We begin with the raw amino-acid sequence, 206 residues long: Thiamine-phosphate synthase (206 aa).

Residues 35 to 39 (QLRDK) and Asn67 contribute to the 4-amino-2-methyl-5-(diphosphooxymethyl)pyrimidine site. 2 residues coordinate Mg(2+): Asp68 and Asp87. Ser106 serves as a coordination point for 4-amino-2-methyl-5-(diphosphooxymethyl)pyrimidine. A 2-[(2R,5Z)-2-carboxy-4-methylthiazol-5(2H)-ylidene]ethyl phosphate-binding site is contributed by 132-134 (TGT). Lys135 lines the 4-amino-2-methyl-5-(diphosphooxymethyl)pyrimidine pocket. 2-[(2R,5Z)-2-carboxy-4-methylthiazol-5(2H)-ylidene]ethyl phosphate is bound by residues Gly163 and 183–184 (IS).

It belongs to the thiamine-phosphate synthase family. Mg(2+) serves as cofactor.

It carries out the reaction 2-[(2R,5Z)-2-carboxy-4-methylthiazol-5(2H)-ylidene]ethyl phosphate + 4-amino-2-methyl-5-(diphosphooxymethyl)pyrimidine + 2 H(+) = thiamine phosphate + CO2 + diphosphate. The catalysed reaction is 2-(2-carboxy-4-methylthiazol-5-yl)ethyl phosphate + 4-amino-2-methyl-5-(diphosphooxymethyl)pyrimidine + 2 H(+) = thiamine phosphate + CO2 + diphosphate. It catalyses the reaction 4-methyl-5-(2-phosphooxyethyl)-thiazole + 4-amino-2-methyl-5-(diphosphooxymethyl)pyrimidine + H(+) = thiamine phosphate + diphosphate. It participates in cofactor biosynthesis; thiamine diphosphate biosynthesis; thiamine phosphate from 4-amino-2-methyl-5-diphosphomethylpyrimidine and 4-methyl-5-(2-phosphoethyl)-thiazole: step 1/1. Condenses 4-methyl-5-(beta-hydroxyethyl)thiazole monophosphate (THZ-P) and 2-methyl-4-amino-5-hydroxymethyl pyrimidine pyrophosphate (HMP-PP) to form thiamine monophosphate (TMP). The polypeptide is Thiamine-phosphate synthase (Methanospirillum hungatei JF-1 (strain ATCC 27890 / DSM 864 / NBRC 100397 / JF-1)).